The following is a 198-amino-acid chain: MIVVLRLGHRPERDKRVTTHVALTARAFGADGIIIVSEEVDLKVKESVEDVVERWGGPFFVKFEKSWRKVMKEFDGVKVHLTMYGIHIDDIIDELREKLREGRDFMVIVGAEKVPREVYELADYNVAIGNQPHSEVAALAVFLDRLLEGKGLRKEFKGAKLKIIPQARGKMVVEVQKDAKQAEASGEGASRKNGQLPS.

S-adenosyl-L-methionine-binding positions include Leu81, 110–114 (GAEKV), and 128–135 (IGNQPHSE). A disordered region spans residues 178–198 (DAKQAEASGEGASRKNGQLPS).

It belongs to the aTrm56 family. As to quaternary structure, homodimer.

It is found in the cytoplasm. The catalysed reaction is cytidine(56) in tRNA + S-adenosyl-L-methionine = 2'-O-methylcytidine(56) in tRNA + S-adenosyl-L-homocysteine + H(+). Specifically catalyzes the AdoMet-dependent 2'-O-ribose methylation of cytidine at position 56 in tRNAs. This Pyrococcus abyssi (strain GE5 / Orsay) protein is tRNA (cytidine(56)-2'-O)-methyltransferase.